The chain runs to 97 residues: MSRKCELTGVGVLYGNNVSHSQRKTRRRFEPNLRSVKFTSDITAGEYRLSVNARCISSVEKAGGFDAYILKADDNVLSSNARAIKKKIIQTKTAKSL.

The protein belongs to the bacterial ribosomal protein bL28 family.

The sequence is that of Large ribosomal subunit protein bL28 from Rickettsia africae (strain ESF-5).